A 540-amino-acid chain; its full sequence is Signal peptide peptidase-like 2 (540 aa).

Residues 1–27 (MDSLRFLRILLLSSSILLLSLRSTVTA) form the signal peptide. The Lumenal portion of the chain corresponds to 28 to 196 (GDIVHQDNLA…PRRPAVDVAE (169 aa)). A glycan (N-linked (GlcNAc...) asparagine) is linked at Asn83. The 79-residue stretch at 95–173 (SCTPLKNKLS…QDAGASLQKM (79 aa)) folds into the PA domain. Asn176 is a glycosylation site (N-linked (GlcNAc...) asparagine). A helical transmembrane segment spans residues 197–217 (VFLWLMAIGTILCASYWSAWS). Over 218–248 (AREAAIEHDKLLKDAIDEIPNTNDGGSGVVE) the chain is Cytoplasmic. A helical transmembrane segment spans residues 249–269 (INSISAIFFVVLASGFLVILY). At 270-278 (KLMSYWFVE) the chain is on the lumenal side. Residues 279–299 (LLVVVFCIGGVEGLQTCLVAL) form a helical membrane-spanning segment. The Cytoplasmic segment spans residues 300–319 (LSRWFQRAADTYVKVPFLGP). Residues 320–340 (ISYLTLAVSPFCIVFAVLWAV) traverse the membrane as a helical segment. The Lumenal segment spans residues 341–345 (YRVHS). The helical transmembrane segment at 346 to 366 (FAWIGQDVLGIALIITVLQIV) threads the bilayer. The Cytoplasmic segment spans residues 367-370 (HVPN). The chain crosses the membrane as a helical span at residues 371 to 391 (LKVGTVLLSCAFLYDIFWVFV). Asp385 is a catalytic residue. Over 392 to 429 (SKKLFHESVMIVVARGDKSGEDGIPMLLKIPRMFDPWG) the chain is Lumenal. The helical transmembrane segment at 430–450 (GYSIIGFGDILLPGLLIAFAL) threads the bilayer. Asp438 is an active-site residue. The Cytoplasmic segment spans residues 451–462 (RYDWLANKTLRT). Residues 463-483 (GYFIWAMVAYGLGLLITYVAL) form a helical membrane-spanning segment. The Lumenal portion of the chain corresponds to 484-488 (NLMDG). Residues 489-509 (HGQPALLYIVPFTLGTMLTLA) traverse the membrane as a helical segment. Positions 492 to 494 (PAL) match the PAL motif. Over 510-540 (RKRDDLWILWTKGEPERACPHHVRLEQCSEK) the chain is Cytoplasmic.

This sequence belongs to the peptidase A22B family. Post-translationally, glycosylated. In terms of tissue distribution, ubiquitous.

It is found in the endosome membrane. Intramembrane-cleaving aspartic protease (I-CLiP) that cleaves type II membrane signal peptides in the hydrophobic plane of the membrane. In Arabidopsis thaliana (Mouse-ear cress), this protein is Signal peptide peptidase-like 2 (SPPL2).